Consider the following 203-residue polypeptide: Ras-related protein Rab-7L1 (203 aa).

Positions 33, 34, 35, 36, 37, and 39 each coordinate GTP. The Effector region signature appears at 36–44 (YKSTVGVDF). Phosphothreonine; by LRRK2 is present on T71. S72 is subject to Phosphoserine; by LRRK2. Residues K126, V156, and K157 each coordinate GTP. S-geranylgeranyl cysteine attachment occurs at residues C202 and C203.

The protein belongs to the small GTPase superfamily. Rab family. As to quaternary structure, interacts with LRRK2 (via the N-terminus); this interaction is direct and stimulates kinase activity. Post-translationally, in case of Salmonella enterica serovar Typhimurium (S.typhimurium) infection, is proteolytically cleaved between Gly-41 and Val-42 by the GtgE viral protease encoded on the Gifsy-2 lysogen bacteriophage, which therefore prevents the recruitment of RAB29 to S.typhimurium-containing vacuoles. In contrast, no proteolytically cleavage is detected in S.typhi-infected cells. Ubiquitous.

It is found in the cell membrane. The protein resides in the cytoplasm. It localises to the perinuclear region. The protein localises to the golgi apparatus. Its subcellular location is the golgi apparatus membrane. It is found in the trans-Golgi network. The protein resides in the vacuole. It localises to the cytoskeleton. In terms of biological role, the small GTPases Rab are key regulators in vesicle trafficking. Essential for maintaining the integrity of the endosome-trans-Golgi network structure. Together with LRRK2, plays a role in the retrograde trafficking pathway for recycling proteins, such as mannose 6 phosphate receptor (M6PR), between lysosomes and the Golgi apparatus in a retromer-dependent manner. Recruits LRRK2 to the Golgi complex and stimulates LRRK2 kinase activity. Stimulates phosphorylation of RAB10 'Thr-73' by LRRK2. Regulates neuronal process morphology in the intact central nervous system (CNS). May play a role in the formation of typhoid toxin transport intermediates during Salmonella enterica serovar Typhi (S.typhi) epithelial cell infection. This Homo sapiens (Human) protein is Ras-related protein Rab-7L1 (RAB29).